Reading from the N-terminus, the 324-residue chain is Delta-aminolevulinic acid dehydratase (324 aa).

The Zn(2+) site is built by cysteine 120, cysteine 122, and cysteine 130. Lysine 195 functions as the Schiff-base intermediate with substrate in the catalytic mechanism. Residues arginine 205 and arginine 216 each coordinate 5-aminolevulinate. Residue glutamate 232 participates in Mg(2+) binding. Lysine 247 serves as the catalytic Schiff-base intermediate with substrate. 5-aminolevulinate contacts are provided by serine 273 and tyrosine 312.

Belongs to the ALAD family. Homooctamer. Zn(2+) is required as a cofactor.

The catalysed reaction is 2 5-aminolevulinate = porphobilinogen + 2 H2O + H(+). Its pathway is porphyrin-containing compound metabolism; protoporphyrin-IX biosynthesis; coproporphyrinogen-III from 5-aminolevulinate: step 1/4. Allosteric enzyme. Stimulated by magnesium ions. Functionally, catalyzes an early step in the biosynthesis of tetrapyrroles. Binds two molecules of 5-aminolevulinate per subunit, each at a distinct site, and catalyzes their condensation to form porphobilinogen. In Escherichia coli (strain K12), this protein is Delta-aminolevulinic acid dehydratase (hemB).